The chain runs to 616 residues: uncharacterized protein (616 aa).

The protein belongs to the UbiD family.

This is an uncharacterized protein from Helicobacter pylori (strain ATCC 700392 / 26695) (Campylobacter pylori).